The chain runs to 226 residues: N-(5'-phosphoribosyl)anthranilate isomerase 2 (226 aa).

The protein belongs to the TrpF family.

It carries out the reaction N-(5-phospho-beta-D-ribosyl)anthranilate = 1-(2-carboxyphenylamino)-1-deoxy-D-ribulose 5-phosphate. Its pathway is amino-acid biosynthesis; L-tryptophan biosynthesis; L-tryptophan from chorismate: step 3/5. The protein is N-(5'-phosphoribosyl)anthranilate isomerase 2 (trpF2) of Methanosarcina mazei (strain ATCC BAA-159 / DSM 3647 / Goe1 / Go1 / JCM 11833 / OCM 88) (Methanosarcina frisia).